The chain runs to 422 residues: Imidazolonepropionase (422 aa).

His82 and His84 together coordinate Fe(3+). The Zn(2+) site is built by His82 and His84. Residues Arg91, Tyr154, and His187 each contribute to the 4-imidazolone-5-propanoate site. Tyr154 contacts N-formimidoyl-L-glutamate. Fe(3+) is bound at residue His252. Position 252 (His252) interacts with Zn(2+). 4-imidazolone-5-propanoate is bound at residue Glu255. Asp327 is a binding site for Fe(3+). Asp327 is a Zn(2+) binding site. Asn329 and Gly331 together coordinate N-formimidoyl-L-glutamate. Ser332 contacts 4-imidazolone-5-propanoate.

Belongs to the metallo-dependent hydrolases superfamily. HutI family. The cofactor is Zn(2+). Fe(3+) is required as a cofactor.

It is found in the cytoplasm. The enzyme catalyses 4-imidazolone-5-propanoate + H2O = N-formimidoyl-L-glutamate. It participates in amino-acid degradation; L-histidine degradation into L-glutamate; N-formimidoyl-L-glutamate from L-histidine: step 3/3. Its function is as follows. Catalyzes the hydrolytic cleavage of the carbon-nitrogen bond in imidazolone-5-propanoate to yield N-formimidoyl-L-glutamate. It is the third step in the universal histidine degradation pathway. The protein is Imidazolonepropionase of Alkaliphilus metalliredigens (strain QYMF).